Consider the following 623-residue polypeptide: Glutathione import ATP-binding protein GsiA (623 aa).

ABC transporter domains follow at residues 15–269 (VSGL…QTLL) and 325–564 (LRSG…RKLM). ATP-binding positions include 49 to 56 (GESGSGKS) and 357 to 364 (GESGSGKS).

This sequence belongs to the ABC transporter superfamily. Glutathione importer (TC 3.A.1.5.11) family. The complex is composed of two ATP-binding proteins (GsiA), two transmembrane proteins (GsiC and GsiD) and a solute-binding protein (GsiB).

The protein localises to the cell inner membrane. It catalyses the reaction glutathione(out) + ATP + H2O = glutathione(in) + ADP + phosphate + H(+). Its function is as follows. Part of the ABC transporter complex GsiABCD involved in glutathione import. Responsible for energy coupling to the transport system. The protein is Glutathione import ATP-binding protein GsiA of Salmonella typhimurium (strain LT2 / SGSC1412 / ATCC 700720).